The chain runs to 436 residues: Xaa-Arg dipeptidase (436 aa).

This sequence belongs to the peptidase M20A family.

The enzyme catalyses beta-alanyl-L-lysine + H2O = beta-alanine + L-lysine. The catalysed reaction is beta-alanyl-L-ornithine + H2O = beta-alanine + L-ornithine. It carries out the reaction N(2)-(4-aminobutanoyl)-L-lysine + H2O = 4-aminobutanoate + L-lysine. It catalyses the reaction N(2)-(4-aminobutanoyl)-L-ornithine + H2O = 4-aminobutanoate + L-ornithine. The enzyme catalyses N(2)-(4-aminobutanoyl)-L-arginine + H2O = 4-aminobutanoate + L-arginine. Catalyzes the peptide bond hydrolysis in dipeptides having basic amino acids lysine, ornithine or arginine at C-terminus. Postulated to function in a metabolite repair mechanism by eliminating alternate dipeptide by-products formed during carnosine synthesis. In Homo sapiens (Human), this protein is Xaa-Arg dipeptidase.